Reading from the N-terminus, the 119-residue chain is Large ribosomal subunit protein uL24 (119 aa).

This sequence belongs to the universal ribosomal protein uL24 family. In terms of assembly, part of the 50S ribosomal subunit.

Functionally, one of two assembly initiator proteins, it binds directly to the 5'-end of the 23S rRNA, where it nucleates assembly of the 50S subunit. One of the proteins that surrounds the polypeptide exit tunnel on the outside of the subunit. This chain is Large ribosomal subunit protein uL24, found in Clavibacter sepedonicus (Clavibacter michiganensis subsp. sepedonicus).